Consider the following 258-residue polypeptide: Imidazole glycerol phosphate synthase subunit HisF (258 aa).

Catalysis depends on residues D11 and D130.

The protein belongs to the HisA/HisF family. In terms of assembly, heterodimer of HisH and HisF.

Its subcellular location is the cytoplasm. The catalysed reaction is 5-[(5-phospho-1-deoxy-D-ribulos-1-ylimino)methylamino]-1-(5-phospho-beta-D-ribosyl)imidazole-4-carboxamide + L-glutamine = D-erythro-1-(imidazol-4-yl)glycerol 3-phosphate + 5-amino-1-(5-phospho-beta-D-ribosyl)imidazole-4-carboxamide + L-glutamate + H(+). It participates in amino-acid biosynthesis; L-histidine biosynthesis; L-histidine from 5-phospho-alpha-D-ribose 1-diphosphate: step 5/9. Its function is as follows. IGPS catalyzes the conversion of PRFAR and glutamine to IGP, AICAR and glutamate. The HisF subunit catalyzes the cyclization activity that produces IGP and AICAR from PRFAR using the ammonia provided by the HisH subunit. The polypeptide is Imidazole glycerol phosphate synthase subunit HisF (Xanthomonas campestris pv. campestris (strain 8004)).